Reading from the N-terminus, the 475-residue chain is Aspartate ammonia-lyase (475 aa).

Residues Thr-104, Ser-143, Thr-144, Asn-145, Thr-190, and His-191 each coordinate L-aspartate. The SS loop stretch occupies residues Gly-320–Asn-329. Ser-321 acts as the Proton acceptor in catalysis. L-aspartate is bound by residues Ser-322 and Lys-327.

The protein belongs to the class-II fumarase/aspartase family. Aspartase subfamily. In terms of assembly, homotetramer.

The enzyme catalyses L-aspartate = fumarate + NH4(+). In terms of biological role, catalyzes the reversible conversion of L-aspartate to fumarate and ammonia. This chain is Aspartate ammonia-lyase, found in Bacillus subtilis (strain 168).